The sequence spans 448 residues: MSKKVFIKTFGCQMNEYDSDKMADVLGAAQGYEPTDDPEQADLILFNTCSVREKAQEKVFSDLGRVKHLKDKGVLIGVGGCVASQEGEEIIKRAPFVDVVFGPQTLHRLPELLNARAAKARPQVDISFPEIEKFDHLPPARVEGASAFVSIMEGCSKYCSYCVVPYTRGEEVSRPFEDVLVEVAGLADQGVKEVTLLGQNVNAYLGAMGDTAEKADFALLLEYVAEIPGIERIRFTTSHPNEFTPRLIEAYAKIPKLVSHLHLPVQHGSDRILMAMKRGYTAMEYKSTIRKLRAIRPDMAMSSDFIVGFPGETEEDFQKMMKLIDDVRFDNSFSFIFSPRPGTPAANLHDDTPHEVKLRRLQELQAVINRNILEISQERVGTVQRLLVEGVSKRDGSELMGRTECNRVVNFPGHERLIGQMIDVKITEARTYTLRGEVVMGEVTTAVG.

Positions 3 to 118 (KKVFIKTFGC…LPELLNARAA (116 aa)) constitute an MTTase N-terminal domain. [4Fe-4S] cluster is bound by residues Cys12, Cys49, Cys81, Cys155, Cys159, and Cys162. The region spanning 141-374 (RVEGASAFVS…QAVINRNILE (234 aa)) is the Radical SAM core domain. One can recognise a TRAM domain in the interval 377-440 (QERVGTVQRL…TYTLRGEVVM (64 aa)).

It belongs to the methylthiotransferase family. MiaB subfamily. Monomer. It depends on [4Fe-4S] cluster as a cofactor.

The protein localises to the cytoplasm. The catalysed reaction is N(6)-dimethylallyladenosine(37) in tRNA + (sulfur carrier)-SH + AH2 + 2 S-adenosyl-L-methionine = 2-methylsulfanyl-N(6)-dimethylallyladenosine(37) in tRNA + (sulfur carrier)-H + 5'-deoxyadenosine + L-methionine + A + S-adenosyl-L-homocysteine + 2 H(+). Functionally, catalyzes the methylthiolation of N6-(dimethylallyl)adenosine (i(6)A), leading to the formation of 2-methylthio-N6-(dimethylallyl)adenosine (ms(2)i(6)A) at position 37 in tRNAs that read codons beginning with uridine. The polypeptide is tRNA-2-methylthio-N(6)-dimethylallyladenosine synthase (Acidovorax sp. (strain JS42)).